The primary structure comprises 576 residues: Probable vesicular glutamate transporter eat-4 (576 aa).

Residues 1-69 (MSSWNEAWDR…QTWIGKCRKR (69 aa)) are Cytoplasmic-facing. A disordered region spans residues 25–46 (AAASATGAAPPQQMQEEGNENP). The segment covering 36–46 (QQMQEEGNENP) has biased composition (polar residues). Residues 70–90 (WLLAILANMGFMISFGIRCNF) traverse the membrane as a helical segment. The Extracellular segment spans residues 91 to 121 (GAAKTHMYKNYTDPYGKVHMHEFNWTIDELS). 2 N-linked (GlcNAc...) asparagine glycosylation sites follow: Asn-100 and Asn-114. A helical transmembrane segment spans residues 122–142 (VMESSYFYGYLVTQIPAGFLA). Topologically, residues 143 to 150 (AKFPPNKL) are cytoplasmic. Residues 151–171 (FGFGIGVGAFLNILLPYGFKV) form a helical membrane-spanning segment. Over 172–174 (KSD) the chain is Extracellular. Residues 175 to 195 (YLVAFIQITQGLVQGVCYPAM) form a helical membrane-spanning segment. At 196 to 213 (HGVWRYWAPPMERSKLAT) the chain is on the cytoplasmic side. A helical transmembrane segment spans residues 214-234 (TAFTGSYAGAVLGLPLSAFLV). Residues 235–239 (SYVSW) are Extracellular-facing. Residues 240–260 (AAPFYLYGVCGVIWAILWFCV) form a helical membrane-spanning segment. Residues 261–305 (TFEKPAFHPTISQEEKIFIEDAIGHVSNTHPTIRSIPWKAIVTSK) are Cytoplasmic-facing. The helical transmembrane segment at 306 to 325 (PVWAIIVANFARSWTFYLLL) threads the bilayer. The Extracellular portion of the chain corresponds to 326–344 (QNQLTYMKEALGMKIADSG). Residues 345 to 365 (LLAAIPHLVMGCVVLMGGQLA) form a helical membrane-spanning segment. Residues 366–381 (DYLRSNKILSTTAVRK) are Cytoplasmic-facing. A helical membrane pass occupies residues 382–402 (IFNCGGFGGEAAFMLIVAYTT). The Extracellular segment spans residues 403-406 (SDTT). The chain crosses the membrane as a helical span at residues 407–427 (AIMALIAAVGMSGFAISGFNV). At 428-437 (NHLDIAPRYA) the chain is on the cytoplasmic side. The chain crosses the membrane as a helical span at residues 438–458 (AILMGFSNGIGTLAGLTCPFV). Residues 459–471 (TEAFTAHSKHGWT) lie on the Extracellular side of the membrane. A helical membrane pass occupies residues 472-492 (SVFLLASLIHFTGVTFYAVYA). Residues 493–576 (SGELQEWAEP…VVENPHYQQW (84 aa)) are Cytoplasmic-facing.

This sequence belongs to the major facilitator superfamily. Sodium/anion cotransporter family. VGLUT subfamily. As to expression, expressed in neurons of the pharynx and the extrapharyngeal nervous system. Highly expressed in male PHC sensory neurons.

The protein localises to the cell membrane. It is found in the synapse. Its function is as follows. Required for glutamatergic synaptic transmission. In AWB and AWC sensory neurons, required for the detection of preferred food sources, probably via glutamatergic neurotransmission from sensory neurons. Negatively regulates the turning step of male mating behavior. This chain is Probable vesicular glutamate transporter eat-4, found in Caenorhabditis elegans.